We begin with the raw amino-acid sequence, 336 residues long: Dihydroorotate dehydrogenase (quinone) (336 aa).

FMN is bound by residues 62 to 66 (AGLDK) and T86. K66 contacts substrate. 111–115 (NRMGF) is a substrate binding site. N139 and N172 together coordinate FMN. Residue N172 participates in substrate binding. S175 acts as the Nucleophile in catalysis. N177 lines the substrate pocket. 2 residues coordinate FMN: K217 and T245. 246-247 (NT) contributes to the substrate binding site. Residues G268, G297, and 318 to 319 (YS) each bind FMN.

This sequence belongs to the dihydroorotate dehydrogenase family. Type 2 subfamily. Monomer. The cofactor is FMN.

It is found in the cell membrane. The catalysed reaction is (S)-dihydroorotate + a quinone = orotate + a quinol. The protein operates within pyrimidine metabolism; UMP biosynthesis via de novo pathway; orotate from (S)-dihydroorotate (quinone route): step 1/1. Functionally, catalyzes the conversion of dihydroorotate to orotate with quinone as electron acceptor. This is Dihydroorotate dehydrogenase (quinone) from Citrobacter koseri (strain ATCC BAA-895 / CDC 4225-83 / SGSC4696).